We begin with the raw amino-acid sequence, 211 residues long: Regulator of G-protein signaling 2 (211 aa).

Disordered regions lie at residues 14-33 (RPMDKSAGSGHKSEEKREKM) and 49-68 (LQNSSTPGKPKTGKKSKQQA). Positions 32–66 (KMKRTLLKDWKTRLSYFLQNSSTPGKPKTGKKSKQ) are necessary for membrane association. A necessary to inhibit protein synthesis region spans residues 79 to 116 (LWSEAFDELLASKYGLAAFRAFLKSEFCEENIEFWLAC). Residues 83–199 (AFDELLASKY…LESEFYQDLC (117 aa)) form the RGS domain.

In terms of assembly, interacts with GNAQ. Does not interact with GNAI1 and GNAI3. Interacts with EIF2B5. Interacts with PRKG1 (isoform alpha). Post-translationally, phosphorylated by protein kinase C. Phosphorylation by PRKG1 leads to activation of RGS2 activity. As to expression, expressed in acute myelogenous leukemia (AML) and in acute lymphoblastic leukemia (ALL).

The protein localises to the cell membrane. Its subcellular location is the cytoplasm. The protein resides in the nucleus. It is found in the nucleolus. It localises to the mitochondrion. Regulates G protein-coupled receptor signaling cascades. Inhibits signal transduction by increasing the GTPase activity of G protein alpha subunits, thereby driving them into their inactive GDP-bound form. It is involved in the negative regulation of the angiotensin-activated signaling pathway. Plays a role in the regulation of blood pressure in response to signaling via G protein-coupled receptors and GNAQ. Plays a role in regulating the constriction and relaxation of vascular smooth muscle. Binds EIF2B5 and blocks its activity, thereby inhibiting the translation of mRNA into protein. The protein is Regulator of G-protein signaling 2 (RGS2) of Homo sapiens (Human).